The sequence spans 130 residues: Small ribosomal subunit protein uS11 (130 aa).

It belongs to the universal ribosomal protein uS11 family. In terms of assembly, part of the 30S ribosomal subunit. Interacts with proteins S7 and S18. Binds to IF-3.

Located on the platform of the 30S subunit, it bridges several disparate RNA helices of the 16S rRNA. Forms part of the Shine-Dalgarno cleft in the 70S ribosome. This chain is Small ribosomal subunit protein uS11, found in Campylobacter hominis (strain ATCC BAA-381 / DSM 21671 / CCUG 45161 / LMG 19568 / NCTC 13146 / CH001A).